The chain runs to 418 residues: MTAHTNSPRIMVIGTGDTKSDELLFMADVIERAGGSPVMIDVSILGNPPYEPAYSKHDVAEAAGTTVQAIIDSGDEHSAMALMAEGATALVRGLSQRGQVDGMIALGGSLGTDLALDIAAILPLVVPKFIVSTIAYSHLLPPERIAPDLMMILWAGGLYGLNPICRSVLSQACGAVVGAAKLVEKPSAEKPLIGMTHLGSSCLKYMRFLKPELEKRGYDVAIFHATGMGGRAYEAVAAQKGFVAVFDFCIQEVTNAESGSVVTSGPDRMENAGRAGIPQIIAPGAVDMVDMPAWQNVPEQFRDRPYHAHNRLIASITVSPEQRRAVARVVAAKLERAAAPVAFILPTGGVQEWDRNGEPLHEPEALGAFLDEMRGAVSGTITFEEVDAHINAPEFASRALAVFDRWVAEGIVVKGNVA.

The protein belongs to the UPF0261 family.

The polypeptide is UPF0261 protein BMEII0128 (Brucella melitensis biotype 1 (strain ATCC 23456 / CCUG 17765 / NCTC 10094 / 16M)).